Reading from the N-terminus, the 327-residue chain is Chain length determinant protein (327 aa).

The Cytoplasmic segment spans residues 1-31; it reads MTVDSNTSSGRGNDPEQIDLIELLLQLWRGK. The helical transmembrane segment at 32-52 threads the bilayer; the sequence is MTIIVAVIIAILLAVGYLMIA. Over 53–294 the chain is Periplasmic; it reads KEKWTSTAII…LPVRRDSPKT (242 aa). The chain crosses the membrane as a helical span at residues 295 to 315; sequence AITLVLAVLLGGMIGAGIVLG. Topologically, residues 316–327 are cytoplasmic; that stretch reads RNALRSYKPKAL.

Belongs to the WzzB/Cld/Rol family.

The protein localises to the cell inner membrane. Its pathway is bacterial outer membrane biogenesis; lipopolysaccharide biosynthesis. Confers a modal distribution of chain length on the O-antigen component of lipopolysaccharide (LPS). Gives rise to a reduced number of short chain molecules and increases in numbers of longer molecules, with a modal value of 20. The chain is Chain length determinant protein (wzzB) from Salmonella typhimurium (strain LT2 / SGSC1412 / ATCC 700720).